The primary structure comprises 727 residues: Long-chain-fatty-acid--[acyl-carrier-protein] ligase AEE15, chloroplastic (727 aa).

Residues 1–66 (MQIRLKPDYS…PSFRRFRVHC (66 aa)) constitute a chloroplast transit peptide.

Belongs to the ATP-dependent AMP-binding enzyme family.

The protein resides in the plastid. The protein localises to the chloroplast. It carries out the reaction a long-chain fatty acid + holo-[ACP] + ATP = a long-chain fatty acyl-[ACP] + AMP + diphosphate. Functionally, probably involved in the activation of fatty acids to acyl-carrier-protein prior to fatty acid elongation in plastids. Acts on medium- to long-chain fatty acids. The polypeptide is Long-chain-fatty-acid--[acyl-carrier-protein] ligase AEE15, chloroplastic (AAE15) (Arabidopsis thaliana (Mouse-ear cress)).